A 565-amino-acid polypeptide reads, in one-letter code: Thiol:disulfide interchange protein DsbD (565 aa).

Positions 1-19 (MAQRIFTLILLLCSTSVFA) are cleaved as a signal peptide. Topologically, residues 20 to 162 (GLFDAPGRSQ…VPQQEQPTAQ (143 aa)) are periplasmic. 2 disulfide bridges follow: C122/C128 and C182/C304. The chain crosses the membrane as a helical span at residues 163-183 (LPFSALWALLIGIGIAFTPCV). Residues 184–207 (LPMYPLISGIVLGGKQRLSTARAL) are Cytoplasmic-facing. The chain crosses the membrane as a helical span at residues 208–228 (LLTFIYVQGMALTYTALGLVV). Residues 229-242 (AAAGLQFQAALQHP) are Periplasmic-facing. Residues 243–263 (YVLIGLTIVFTLLAMSMFGLL) traverse the membrane as a helical segment. Topologically, residues 264–295 (TLQLPSSLQTRLTLMSNRQQGGSPGGVFIMGT) are cytoplasmic. Residues 296–316 (IAGLICSPCTTAPLSAILLYI) form a helical membrane-spanning segment. Residues 317 to 322 (AQSGNM) lie on the Periplasmic side of the membrane. A helical membrane pass occupies residues 323 to 343 (WLGGGTLYLYALGMGLPLMLI). The Cytoplasmic segment spans residues 344-356 (TVFGNRLLPKSGP). Residues 357–377 (WMEQVKTAFGFVILALPVFLL) form a helical membrane-spanning segment. The Periplasmic portion of the chain corresponds to 378 to 383 (ERVIGD). A helical membrane pass occupies residues 384–404 (VWGLRLWSALGVAFFGWAFIT). Over 405-417 (SLQAKRGWMRVVQ) the chain is Cytoplasmic. A helical transmembrane segment spans residues 418–438 (IILLAAALVSVRPLQDWAFGA). In terms of domain architecture, Thioredoxin spans 434-565 (WAFGATHTAQ…FSAHLRDRQP (132 aa)). The Periplasmic segment spans residues 439 to 565 (THTAQTQTHL…FSAHLRDRQP (127 aa)). A disulfide bond links C480 and C483.

The protein belongs to the thioredoxin family. DsbD subfamily.

The protein resides in the cell inner membrane. The enzyme catalyses [protein]-dithiol + NAD(+) = [protein]-disulfide + NADH + H(+). It catalyses the reaction [protein]-dithiol + NADP(+) = [protein]-disulfide + NADPH + H(+). In terms of biological role, required to facilitate the formation of correct disulfide bonds in some periplasmic proteins and for the assembly of the periplasmic c-type cytochromes. Acts by transferring electrons from cytoplasmic thioredoxin to the periplasm. This transfer involves a cascade of disulfide bond formation and reduction steps. This Escherichia coli O157:H7 protein is Thiol:disulfide interchange protein DsbD.